The chain runs to 290 residues: MRIADYSVTKAVLDRHGFTFKKSFGQNFLTDTNILQKIVDTAEIDQNVNVIEIGPGIGALTEFLAENAAEVMAFEIDDRLVPILADTLRDFDNVQVVNQDILKADLQTQIKQFKNPDLPIKVVANLPYYITTPILMHLIESKIPFQEFVVMMQREVADRISAEPNTKAYGSLSIAVQYYMTAKVAFIVPRTVFVPAPNVDSAILKMMRRDQPLIEVKDEDFFFRVSRLSFVHRRKTLWNNLTSHFGKSEDIKAKLEKGLALADIKSSIRGEALSIQDFGKLADALKEVGL.

S-adenosyl-L-methionine contacts are provided by N27, L29, G54, E75, D100, and N125.

It belongs to the class I-like SAM-binding methyltransferase superfamily. rRNA adenine N(6)-methyltransferase family. RsmA subfamily.

It localises to the cytoplasm. It catalyses the reaction adenosine(1518)/adenosine(1519) in 16S rRNA + 4 S-adenosyl-L-methionine = N(6)-dimethyladenosine(1518)/N(6)-dimethyladenosine(1519) in 16S rRNA + 4 S-adenosyl-L-homocysteine + 4 H(+). Its function is as follows. Specifically dimethylates two adjacent adenosines (A1518 and A1519) in the loop of a conserved hairpin near the 3'-end of 16S rRNA in the 30S particle. May play a critical role in biogenesis of 30S subunits. The polypeptide is Ribosomal RNA small subunit methyltransferase A (Streptococcus pyogenes serotype M3 (strain ATCC BAA-595 / MGAS315)).